Consider the following 260-residue polypeptide: Late transcription factor 1 (260 aa).

The protein belongs to the chordopoxvirinae VLTF-1 family. As to quaternary structure, interacts with the late transcription factors VLTF-2 and VLTF-3. Interacts with the late transcription elongation factor VLTF-4. Interacts with itself.

Associates with RNA polymerase to initiate transcription from late gene promoters. The protein is Late transcription factor 1 (OPG093) of Homo sapiens (Human).